Reading from the N-terminus, the 627-residue chain is Altered inheritance of mitochondria protein 9, mitochondrial (627 aa).

The N-terminal 43 residues, 1–43 (MIRYTVAGHSRRCVVGASKRVGAIKCITVAATKRFISNKPNEV), are a transit peptide targeting the mitochondrion.

This sequence belongs to the AIM9 family.

It localises to the mitochondrion. The chain is Altered inheritance of mitochondria protein 9, mitochondrial (AIM9) from Saccharomyces cerevisiae (strain RM11-1a) (Baker's yeast).